The following is a 285-amino-acid chain: NADPH-dependent 7-cyano-7-deazaguanine reductase (285 aa).

91-93 contacts substrate; sequence IES. 93–94 serves as a coordination point for NADPH; the sequence is SK. Cys191 acts as the Thioimide intermediate in catalysis. The Proton donor role is filled by Asp198. 230 to 231 contributes to the substrate binding site; that stretch reads HE. 259–260 provides a ligand contact to NADPH; the sequence is RG.

The protein belongs to the GTP cyclohydrolase I family. QueF type 2 subfamily. Homodimer.

It localises to the cytoplasm. It carries out the reaction 7-aminomethyl-7-carbaguanine + 2 NADP(+) = 7-cyano-7-deazaguanine + 2 NADPH + 3 H(+). It functions in the pathway tRNA modification; tRNA-queuosine biosynthesis. Its function is as follows. Catalyzes the NADPH-dependent reduction of 7-cyano-7-deazaguanine (preQ0) to 7-aminomethyl-7-deazaguanine (preQ1). The polypeptide is NADPH-dependent 7-cyano-7-deazaguanine reductase (Legionella pneumophila (strain Paris)).